The primary structure comprises 420 residues: UDP-N-acetylglucosamine 1-carboxyvinyltransferase (420 aa).

A phosphoenolpyruvate-binding site is contributed by 22–23; the sequence is KN. Arg92 contacts UDP-N-acetyl-alpha-D-glucosamine. The active-site Proton donor is the Cys116. Cys116 is subject to 2-(S-cysteinyl)pyruvic acid O-phosphothioketal. UDP-N-acetyl-alpha-D-glucosamine-binding residues include Asp306 and Ile328.

It belongs to the EPSP synthase family. MurA subfamily.

It localises to the cytoplasm. It carries out the reaction phosphoenolpyruvate + UDP-N-acetyl-alpha-D-glucosamine = UDP-N-acetyl-3-O-(1-carboxyvinyl)-alpha-D-glucosamine + phosphate. The protein operates within cell wall biogenesis; peptidoglycan biosynthesis. In terms of biological role, cell wall formation. Adds enolpyruvyl to UDP-N-acetylglucosamine. This chain is UDP-N-acetylglucosamine 1-carboxyvinyltransferase, found in Blochmanniella floridana.